Reading from the N-terminus, the 796-residue chain is ER degradation-enhancing alpha-mannosidase-like protein 1 (796 aa).

The N-terminal stretch at Met1 to Cys20 is a signal peptide. N-linked (GlcNAc...) asparagine glycosylation occurs at Asn86. Glu372 functions as the Proton donor in the catalytic mechanism. Thr495 lines the Ca(2+) pocket. Asn517, Asn672, and Asn762 each carry an N-linked (GlcNAc...) asparagine glycan.

The protein belongs to the glycosyl hydrolase 47 family. As to quaternary structure, interacts with PDI1. The cofactor is Ca(2+).

The protein localises to the endoplasmic reticulum lumen. The catalysed reaction is Hydrolysis of terminal, non-reducing alpha-D-mannose residues in alpha-D-mannosides.. Its pathway is protein modification; protein glycosylation. In terms of biological role, alpha-1,2-specific exomannosidase involved in endoplasmic reticulum-associated degradation (ERAD). Delivers misfolded glycoproteins to proteasomes. Forms a complex with PDI1 to process unfolded protein-bound Man8GlcNAc2 oligosaccharides to Man7GlcNAc2, promoting degradation in unfolded protein response. The polypeptide is ER degradation-enhancing alpha-mannosidase-like protein 1 (MNL1) (Saccharomyces cerevisiae (strain ATCC 204508 / S288c) (Baker's yeast)).